Here is a 507-residue protein sequence, read N- to C-terminus: ATP synthase subunit alpha, chloroplastic (507 aa).

Position 170-177 (170-177) interacts with ATP; it reads GDRQTGKT.

It belongs to the ATPase alpha/beta chains family. In terms of assembly, F-type ATPases have 2 components, CF(1) - the catalytic core - and CF(0) - the membrane proton channel. CF(1) has five subunits: alpha(3), beta(3), gamma(1), delta(1), epsilon(1). CF(0) has four main subunits: a, b, b' and c.

It is found in the plastid. The protein localises to the chloroplast thylakoid membrane. The enzyme catalyses ATP + H2O + 4 H(+)(in) = ADP + phosphate + 5 H(+)(out). Functionally, produces ATP from ADP in the presence of a proton gradient across the membrane. The alpha chain is a regulatory subunit. In Nicotiana tomentosiformis (Tobacco), this protein is ATP synthase subunit alpha, chloroplastic.